Here is a 509-residue protein sequence, read N- to C-terminus: NAD-dependent histone deacetylase SIR2 (509 aa).

Residues 1–35 form a disordered region; sequence MIISRGSHVDEEPVAKKPRISVGEMTDDTTDDGLN. The segment covering 25–35 has biased composition (acidic residues); that stretch reads MTDDTTDDGLN. The 292-residue stretch at 185–476 folds into the Deacetylase sirtuin-type domain; sequence RLSNFYTIDH…TVVAQKCEWD (292 aa). NAD(+) contacts are provided by residues 210 to 229 and 292 to 295; these read GAGV…EGFY and QNID. H312 (proton acceptor) is an active-site residue. Zn(2+)-binding residues include C320, C323, C344, and C347. NAD(+)-binding positions include 420–422, 445–447, and C462; these read GTS and NKD.

Belongs to the sirtuin family. Class I subfamily. Requires Zn(2+) as cofactor.

The protein resides in the nucleus. The catalysed reaction is N(6)-acetyl-L-lysyl-[protein] + NAD(+) + H2O = 2''-O-acetyl-ADP-D-ribose + nicotinamide + L-lysyl-[protein]. NAD-dependent deacetylase. Heterochromatin component that silences transcription at silent mating loci, telomeres and the ribosomal DNA, and that also suppresses recombination in the rDNA and extends replicative life span. It acts as a NAD-dependent histone deacetylase, which deacetylates 'Lys-9' and 'Lys-14' of Histone H3 and 'Lys-16' of Histone H4. This is NAD-dependent histone deacetylase SIR2 (SIR2) from Candida glabrata (strain ATCC 2001 / BCRC 20586 / JCM 3761 / NBRC 0622 / NRRL Y-65 / CBS 138) (Yeast).